We begin with the raw amino-acid sequence, 340 residues long: Photosystem II protein D1 (340 aa).

Transmembrane regions (helical) follow at residues 25-42 (YIGWFGLLVFPLLSLATV), 114-129 (HFFLGVCGWMGREWEF), and 138-152 (WIFVAFSAPIAAAAA). His-114 provides a ligand contact to chlorophyll a. Residue Trp-122 participates in pheophytin a binding. The [CaMn4O5] cluster site is built by Asp-166 and Glu-185. The helical transmembrane segment at 193-214 (FHILGVAGVFGGSLFSAMHGSL) threads the bilayer. His-194 contributes to the chlorophyll a binding site. A quinone is bound by residues His-211 and 260 to 261 (SF). A Fe cation-binding site is contributed by His-211. His-268 serves as a coordination point for Fe cation. Residues 270-284 (FLAAWPVIGIWITSL) traverse the membrane as a helical segment. Residues His-328, Glu-329, Asp-338, and Ala-340 each coordinate [CaMn4O5] cluster.

Belongs to the reaction center PufL/M/PsbA/D family. As to quaternary structure, PSII is composed of 1 copy each of membrane proteins PsbA, PsbB, PsbC, PsbD, PsbE, PsbF, PsbH, PsbI, PsbJ, PsbK, PsbL, PsbM, PsbT, PsbX, PsbY, PsbZ, Psb30/Ycf12, at least 3 peripheral proteins of the oxygen-evolving complex and a large number of cofactors. It forms dimeric complexes. It depends on The D1/D2 heterodimer binds P680, chlorophylls that are the primary electron donor of PSII, and subsequent electron acceptors. It shares a non-heme iron and each subunit binds pheophytin, quinone, additional chlorophylls, carotenoids and lipids. D1 provides most of the ligands for the Mn4-Ca-O5 cluster of the oxygen-evolving complex (OEC). There is also a Cl(-1) ion associated with D1 and D2, which is required for oxygen evolution. The PSII complex binds additional chlorophylls, carotenoids and specific lipids. as a cofactor. Post-translationally, tyr-157 forms a radical intermediate that is referred to as redox-active TyrZ, YZ or Y-Z.

It localises to the plastid. It is found in the chloroplast thylakoid membrane. It carries out the reaction 2 a plastoquinone + 4 hnu + 2 H2O = 2 a plastoquinol + O2. Functionally, photosystem II (PSII) is a light-driven water:plastoquinone oxidoreductase that uses light energy to abstract electrons from H(2)O, generating O(2) and a proton gradient subsequently used for ATP formation. It consists of a core antenna complex that captures photons, and an electron transfer chain that converts photonic excitation into a charge separation. The D1/D2 (PsbA/PsbD) reaction center heterodimer binds P680, the primary electron donor of PSII as well as several subsequent electron acceptors. The chain is Photosystem II protein D1 from Amphidinium carterae (Dinoflagellate).